The following is a 201-amino-acid chain: Recombination protein RecR (201 aa).

The C4-type zinc-finger motif lies at 57-72 (CADCRTFTEQDICTIC). Residues 81–176 (GQICVVESPA…VASRIAHGVP (96 aa)) form the Toprim domain.

Belongs to the RecR family.

Its function is as follows. May play a role in DNA repair. It seems to be involved in an RecBC-independent recombinational process of DNA repair. It may act with RecF and RecO. This Serratia proteamaculans (strain 568) protein is Recombination protein RecR.